The chain runs to 248 residues: Tabinhibitin 10 (248 aa).

Positions 1–22 (MTLKRIFCAALALIVLQSVASA) are cleaved as a signal peptide. The SCP domain occupies 66–208 (LQKTNWLRGV…NYKGAFHCSL (143 aa)). Positions 221-223 (RGD) match the Cell attachment site motif.

This sequence belongs to the CRISP family. Expressed in salivary glands.

The protein localises to the secreted. Functionally, inhibits platelet aggregation induced by all agonists tested (ADP, arachidonic acid, the thromboxane A2 analog U46619, thrombin, and snake venom snaclecs (TMVA that activates platelet through GPIB, and stejnulxin that specifically acts through GPVI (GP6))). May act by competing with fibrinogen for binding to glycoprotein IIb/IIIa (ITGA2B/ITGB3). The chain is Tabinhibitin 10 from Tabanus yao (Horsefly).